A 182-amino-acid chain; its full sequence is Large ribosomal subunit protein bL17m (182 aa).

This sequence belongs to the bacterial ribosomal protein bL17 family.

The protein localises to the mitochondrion. The chain is Large ribosomal subunit protein bL17m (mrpl17) from Dictyostelium discoideum (Social amoeba).